Consider the following 276-residue polypeptide: D-aminoacyl-tRNA deacylase (276 aa).

This sequence belongs to the DtdA deacylase family. As to quaternary structure, monomer. Zn(2+) serves as cofactor.

It catalyses the reaction a D-aminoacyl-tRNA + H2O = a tRNA + a D-alpha-amino acid + H(+). The enzyme catalyses glycyl-tRNA(Ala) + H2O = tRNA(Ala) + glycine + H(+). Functionally, D-aminoacyl-tRNA deacylase with broad substrate specificity. By recycling D-aminoacyl-tRNA to D-amino acids and free tRNA molecules, this enzyme counteracts the toxicity associated with the formation of D-aminoacyl-tRNA entities in vivo. This Korarchaeum cryptofilum (strain OPF8) protein is D-aminoacyl-tRNA deacylase.